Consider the following 222-residue polypeptide: Adenylate kinase (222 aa).

10-15 (GAGKGT) serves as a coordination point for ATP. An NMP region spans residues 30-59 (STGDMLRAAVKAGTPLGIEAKKVMDAGGLV). AMP contacts are provided by residues Thr31, Arg36, 57 to 59 (GLV), 85 to 88 (GFPR), and Gln92. Residues 122-159 (GRRVHVASGRTYHVKYNPPKTEGVDDESGEPLIQRDDD) form an LID region. ATP is bound by residues Arg123 and 132–133 (TY). A disordered region spans residues 138 to 160 (NPPKTEGVDDESGEPLIQRDDDK). Residues Arg156 and Arg167 each coordinate AMP. Residue Gly207 participates in ATP binding.

This sequence belongs to the adenylate kinase family. Monomer.

The protein resides in the cytoplasm. It carries out the reaction AMP + ATP = 2 ADP. Its pathway is purine metabolism; AMP biosynthesis via salvage pathway; AMP from ADP: step 1/1. Catalyzes the reversible transfer of the terminal phosphate group between ATP and AMP. Plays an important role in cellular energy homeostasis and in adenine nucleotide metabolism. This is Adenylate kinase from Ralstonia pickettii (strain 12J).